Consider the following 162-residue polypeptide: Lipoprotein signal peptidase (162 aa).

The next 2 helical transmembrane spans lie at 66–86 (PFFIAVTLVAMAAIAITFRKL) and 92–112 (LAAVSLSLIFSGAVGNLIDRV). Catalysis depends on residues Asp-119 and Asp-137. A helical transmembrane segment spans residues 132–152 (AFNVADSAICVGVALLALDMI).

Belongs to the peptidase A8 family.

It is found in the cell inner membrane. It catalyses the reaction Release of signal peptides from bacterial membrane prolipoproteins. Hydrolyzes -Xaa-Yaa-Zaa-|-(S,diacylglyceryl)Cys-, in which Xaa is hydrophobic (preferably Leu), and Yaa (Ala or Ser) and Zaa (Gly or Ala) have small, neutral side chains.. The protein operates within protein modification; lipoprotein biosynthesis (signal peptide cleavage). This protein specifically catalyzes the removal of signal peptides from prolipoproteins. This Geobacter metallireducens (strain ATCC 53774 / DSM 7210 / GS-15) protein is Lipoprotein signal peptidase.